Here is a 79-residue protein sequence, read N- to C-terminus: Conotoxin VnMSGL-0122 (79 aa).

An N-terminal signal peptide occupies residues 1–20 (MSGLGIMVLALLLLVFMATS). Positions 21–44 (HQDGGGKQATQRDAINVRRRRSIT) are excised as a propeptide. Disulfide bonds link Cys52–Cys64, Cys56–Cys73, and Cys63–Cys77. Leu78 is modified (leucine amide).

This sequence belongs to the conotoxin O3 superfamily. In terms of tissue distribution, expressed by the venom duct.

The protein localises to the secreted. This is Conotoxin VnMSGL-0122 from Conus ventricosus (Mediterranean cone).